An 88-amino-acid chain; its full sequence is uncharacterized protein (88 aa).

2 helical membrane passes run 27 to 46 and 61 to 83; these read LFIF…ETPH and SMCL…LILI.

It is found in the membrane. This is an uncharacterized protein from Saccharomyces cerevisiae (strain ATCC 204508 / S288c) (Baker's yeast).